The sequence spans 601 residues: Glutathione-regulated potassium-efflux system protein KefB (601 aa).

Helical transmembrane passes span 4–24 (SDFL…VPLA), 29–49 (IGAV…GLGF), 55–75 (EILH…GLEL), 87–107 (IFGV…GLLM), 115–135 (AAVV…LQLM), 152–172 (VLLF…LLAG), 177–197 (HFDW…LIGG), 207–227 (FIAA…LVLG), 230–250 (LFMD…GVLL), 268–288 (GLLL…GVLY), 291–311 (LLWV…VLYL), 324–344 (MQFA…FSSA), and 356–376 (ALLL…MKLV). In terms of domain architecture, RCK N-terminal spans 400–519 (KPQVIVVGFG…AGVTQFSRET (120 aa)).

Belongs to the monovalent cation:proton antiporter 2 (CPA2) transporter (TC 2.A.37) family. KefB subfamily. Interacts with the regulatory subunit KefG.

The protein localises to the cell inner membrane. Functionally, pore-forming subunit of a potassium efflux system that confers protection against electrophiles. Catalyzes K(+)/H(+) antiport. The sequence is that of Glutathione-regulated potassium-efflux system protein KefB from Escherichia coli O127:H6 (strain E2348/69 / EPEC).